The primary structure comprises 100 residues: Integration host factor subunit alpha (100 aa).

A disordered region spans residues 54–73; it reads DLRDKRQRPGRNPKTGEEIP.

This sequence belongs to the bacterial histone-like protein family. Heterodimer of an alpha and a beta chain.

Functionally, this protein is one of the two subunits of integration host factor, a specific DNA-binding protein that functions in genetic recombination as well as in transcriptional and translational control. This is Integration host factor subunit alpha from Pseudomonas savastanoi pv. phaseolicola (strain 1448A / Race 6) (Pseudomonas syringae pv. phaseolicola (strain 1448A / Race 6)).